Consider the following 37-residue polypeptide: Large ribosomal subunit protein bL36c (37 aa).

Belongs to the bacterial ribosomal protein bL36 family.

Its subcellular location is the plastid. It is found in the chloroplast. The polypeptide is Large ribosomal subunit protein bL36c (rpl36) (Pisum sativum (Garden pea)).